The sequence spans 303 residues: MSFTTKVKEELIHLSTGDNNELAAIIKLSGSLGLAHQSLHLSITTENAKIARYIYSLIEDAYVIVPEIRYHQKTNLRKNRVYTVYVEQGVETILADLKLADSFFGLETGIEPQVLSDDNAGRSYLKGAFLAAGSIRDPESGKYQLEIYSVYLDHAQDLAQLMQKFMLDAKTIEHKSGAVTYLQKAEDIMDFLIIIGAMSCKEDFEAIKLLREARNDINRANNAETANIAKTISASMKTINNIIKIMDTIGLESLPIELQQVAQLRVKHPDYSIQQVADALEFPITKSGVNHRLRKINKIADDL.

The segment at residues 272–303 (SIQQVADALEFPITKSGVNHRLRKINKIADDL) is a DNA-binding region (H-T-H motif).

It belongs to the WhiA family.

Functionally, involved in cell division and chromosome segregation. This is Probable cell division protein WhiA from Streptococcus pyogenes serotype M1.